Consider the following 714-residue polypeptide: Protein artemis (714 aa).

4 disordered regions span residues 391–500, 516–577, 598–617, and 638–683; these read ELFD…ESNA, ESSE…TVLI, ALLS…RWKL, and EKDA…LTPD. Over residues 427–440 the composition is skewed to polar residues; the sequence is NESTESYRANTAYT. Over residues 447 to 468 the composition is skewed to acidic residues; that stretch reads VDCEESNDDDDDDDDDDKEDDS. Polar residues-rich tracts occupy residues 484–500 and 532–543; these read SIAS…ESNA and GSQSLFSDSDGV. Over residues 544–561 the composition is skewed to low complexity; the sequence is SDSTHISSQNSSQSTHIS. Residues 562-577 are compositionally biased toward polar residues; sequence EQGSQGWDSQMDTVLI. Composition is skewed to basic and acidic residues over residues 603-615 and 660-670; these read DTPR…DSRW and RTPDLELKRDS. The residue at position 670 (Ser670) is a Phosphoserine; by ATM.

This sequence belongs to the DNA repair metallo-beta-lactamase (DRMBL) family. Interacts with PRKDC. Post-translationally, phosphorylation on undefined residues by PRKDC may stimulate endonucleolytic activity on 5' and 3' hairpins and overhangs. PRKDC must remain present, even after phosphorylation, for efficient hairpin opening.

It localises to the nucleus. Required for V(D)J recombination, the process by which exons encoding the antigen-binding domains of immunoglobulins and T-cell receptor proteins are assembled from individual V, (D), and J gene segments. V(D)J recombination is initiated by the lymphoid specific RAG endonuclease complex, which generates site specific DNA double strand breaks (DSBs). These DSBs present two types of DNA end structures: hairpin sealed coding ends and phosphorylated blunt signal ends. These ends are independently repaired by the non homologous end joining (NHEJ) pathway to form coding and signal joints respectively. This protein exhibits single-strand specific 5'-3' exonuclease activity in isolation, and acquires endonucleolytic activity on 5' and 3' hairpins and overhangs when in a complex with PRKDC. The latter activity is required specifically for the resolution of closed hairpins prior to the formation of the coding joint. May also be required for the repair of complex DSBs induced by ionizing radiation, which require substantial end-processing prior to religation by NHEJ. This Gallus gallus (Chicken) protein is Protein artemis (DCLRE1C).